The primary structure comprises 461 residues: Bifunctional protein GlmU (461 aa).

Residues 1–234 (MSLSVVILAA…EIEVEGANNR (234 aa)) are pyrophosphorylase. UDP-N-acetyl-alpha-D-glucosamine-binding positions include 8–11 (LAAG), Lys-22, Gln-77, 82–83 (GT), 104–106 (YGD), Gly-141, Glu-159, Asn-174, and Asn-232. Asp-106 is a Mg(2+) binding site. Residue Asn-232 coordinates Mg(2+). The tract at residues 235-255 (VQLATLERAYQARIAEELMIA) is linker. Residues 256-461 (GASLRDPARI…AGWQRPVKKS (206 aa)) form an N-acetyltransferase region. UDP-N-acetyl-alpha-D-glucosamine contacts are provided by Arg-338 and Lys-356. The active-site Proton acceptor is the His-368. UDP-N-acetyl-alpha-D-glucosamine-binding residues include Tyr-371 and Asn-382. Residues Ala-385, 391 to 392 (NY), Ser-410, Ala-428, and Arg-445 contribute to the acetyl-CoA site.

In the N-terminal section; belongs to the N-acetylglucosamine-1-phosphate uridyltransferase family. The protein in the C-terminal section; belongs to the transferase hexapeptide repeat family. Homotrimer. Mg(2+) is required as a cofactor.

The protein localises to the cytoplasm. The enzyme catalyses alpha-D-glucosamine 1-phosphate + acetyl-CoA = N-acetyl-alpha-D-glucosamine 1-phosphate + CoA + H(+). It carries out the reaction N-acetyl-alpha-D-glucosamine 1-phosphate + UTP + H(+) = UDP-N-acetyl-alpha-D-glucosamine + diphosphate. Its pathway is nucleotide-sugar biosynthesis; UDP-N-acetyl-alpha-D-glucosamine biosynthesis; N-acetyl-alpha-D-glucosamine 1-phosphate from alpha-D-glucosamine 6-phosphate (route II): step 2/2. The protein operates within nucleotide-sugar biosynthesis; UDP-N-acetyl-alpha-D-glucosamine biosynthesis; UDP-N-acetyl-alpha-D-glucosamine from N-acetyl-alpha-D-glucosamine 1-phosphate: step 1/1. It participates in bacterial outer membrane biogenesis; LPS lipid A biosynthesis. In terms of biological role, catalyzes the last two sequential reactions in the de novo biosynthetic pathway for UDP-N-acetylglucosamine (UDP-GlcNAc). The C-terminal domain catalyzes the transfer of acetyl group from acetyl coenzyme A to glucosamine-1-phosphate (GlcN-1-P) to produce N-acetylglucosamine-1-phosphate (GlcNAc-1-P), which is converted into UDP-GlcNAc by the transfer of uridine 5-monophosphate (from uridine 5-triphosphate), a reaction catalyzed by the N-terminal domain. This chain is Bifunctional protein GlmU, found in Colwellia psychrerythraea (strain 34H / ATCC BAA-681) (Vibrio psychroerythus).